We begin with the raw amino-acid sequence, 55 residues long: Accessory gland-specific peptide 70A (55 aa).

Residues 1–19 (MKTLALFLVLVCVLGLVQS) form the signal peptide. Residues 20-33 (WEWPWNRKPTKFPI) are essential for binding to sperm. Pro-28 and Pro-32 each carry hydroxyproline. An Isoleucine derivative modification is found at Ile-33. Pro-34, Pro-36, and Pro-38 each carry hydroxyproline. Positions 36–55 (PNPRDKWCRLNLGPAWGGRC) are sufficient to induce PMR. Cys-43 and Cys-55 are disulfide-bonded.

The protein belongs to the Drosophila sex peptide family. In terms of processing, sperm-bound protein is cleaved to release an active C-terminal peptide. Gradual release from stored sperm may function to prolong PMR and enhance male reproductive success. Main cells of the accessory glands of males (paragonial gland).

The protein resides in the secreted. Male seminal protein which triggers short- and long-term post-mating behavioral responses (PMR) in female Drosophila. Binds initially to sperm where it is later cleaved to release an active peptide within the female reproductive tract. Signals via the sex peptide receptor (SPR) in female flies; may also act via other receptors. Moderates the activity of distinct neuronal circuitries in the female genital tract to promote specific PMRs including: enhanced ovulation, increased egg laying rate, increased feeding/foraging rate, induced antimicrobial peptide synthesis, reduced mating receptivity, reduced day-time sleep and reduced lifespan in multiple mated females. This Drosophila melanogaster (Fruit fly) protein is Accessory gland-specific peptide 70A (SP).